A 292-amino-acid polypeptide reads, in one-letter code: WRKY transcription factor 55 (292 aa).

Positions 133-155 (VERSGASGSSTPRQRRRKDEGEE) are disordered. The segment at residues 167–235 (NTDLPPDDNH…YRGSHTCYNS (69 aa)) is a DNA-binding region (WRKY).

It belongs to the WRKY group III family.

Its subcellular location is the nucleus. Transcription factor. Interacts specifically with the W box (5'-(T)TGAC[CT]-3'), a frequently occurring elicitor-responsive cis-acting element. In Arabidopsis thaliana (Mouse-ear cress), this protein is WRKY transcription factor 55 (WRKY55).